We begin with the raw amino-acid sequence, 588 residues long: Adenine deaminase (588 aa).

This sequence belongs to the metallo-dependent hydrolases superfamily. Adenine deaminase family. Homodimer. Mn(2+) serves as cofactor.

The catalysed reaction is adenine + H2O + H(+) = hypoxanthine + NH4(+). The polypeptide is Adenine deaminase (Escherichia coli O139:H28 (strain E24377A / ETEC)).